The primary structure comprises 277 residues: Hydroxyethylthiazole kinase (277 aa).

M55 is a substrate binding site. Residues R130 and S176 each contribute to the ATP site. G203 serves as a coordination point for substrate.

Belongs to the Thz kinase family. Mg(2+) serves as cofactor.

The enzyme catalyses 5-(2-hydroxyethyl)-4-methylthiazole + ATP = 4-methyl-5-(2-phosphooxyethyl)-thiazole + ADP + H(+). Its pathway is cofactor biosynthesis; thiamine diphosphate biosynthesis; 4-methyl-5-(2-phosphoethyl)-thiazole from 5-(2-hydroxyethyl)-4-methylthiazole: step 1/1. Its function is as follows. Catalyzes the phosphorylation of the hydroxyl group of 4-methyl-5-beta-hydroxyethylthiazole (THZ). This chain is Hydroxyethylthiazole kinase, found in Cutibacterium acnes (strain DSM 16379 / KPA171202) (Propionibacterium acnes).